A 416-amino-acid polypeptide reads, in one-letter code: Gamma-glutamyl phosphate reductase (416 aa).

The protein belongs to the gamma-glutamyl phosphate reductase family.

It is found in the cytoplasm. It catalyses the reaction L-glutamate 5-semialdehyde + phosphate + NADP(+) = L-glutamyl 5-phosphate + NADPH + H(+). The protein operates within amino-acid biosynthesis; L-proline biosynthesis; L-glutamate 5-semialdehyde from L-glutamate: step 2/2. Its function is as follows. Catalyzes the NADPH-dependent reduction of L-glutamate 5-phosphate into L-glutamate 5-semialdehyde and phosphate. The product spontaneously undergoes cyclization to form 1-pyrroline-5-carboxylate. This is Gamma-glutamyl phosphate reductase from Streptococcus pyogenes serotype M49 (strain NZ131).